The chain runs to 152 residues: Small ribosomal subunit protein uS15 (152 aa).

Positions 1-10 (MAKMHTRTKG) are enriched in basic residues. The segment at 1–26 (MAKMHTRTKGKSGSTKPIRSESPAWS) is disordered. The segment covering 11-26 (KSGSTKPIRSESPAWS) has biased composition (polar residues).

This sequence belongs to the universal ribosomal protein uS15 family. As to quaternary structure, part of the 30S ribosomal subunit.

In Methanococcoides burtonii (strain DSM 6242 / NBRC 107633 / OCM 468 / ACE-M), this protein is Small ribosomal subunit protein uS15.